Here is a 179-residue protein sequence, read N- to C-terminus: Large ribosomal subunit protein uL5 (179 aa).

Belongs to the universal ribosomal protein uL5 family. In terms of assembly, part of the 50S ribosomal subunit; part of the 5S rRNA/L5/L18/L25 subcomplex. Contacts the 5S rRNA and the P site tRNA. Forms a bridge to the 30S subunit in the 70S ribosome.

This is one of the proteins that bind and probably mediate the attachment of the 5S RNA into the large ribosomal subunit, where it forms part of the central protuberance. In the 70S ribosome it contacts protein S13 of the 30S subunit (bridge B1b), connecting the 2 subunits; this bridge is implicated in subunit movement. Contacts the P site tRNA; the 5S rRNA and some of its associated proteins might help stabilize positioning of ribosome-bound tRNAs. This chain is Large ribosomal subunit protein uL5, found in Clostridium novyi (strain NT).